The sequence spans 210 residues: Glycerol-3-phosphate acyltransferase (210 aa).

A run of 5 helical transmembrane segments spans residues 1 to 21 (MLLS…FPAG), 53 to 73 (GPAL…VVAA), 87 to 107 (IAWL…LPVW), 122 to 142 (VLLA…LLLL), and 147 to 167 (IVSL…LILP).

This sequence belongs to the PlsY family. Probably interacts with PlsX.

The protein resides in the cell inner membrane. The catalysed reaction is an acyl phosphate + sn-glycerol 3-phosphate = a 1-acyl-sn-glycero-3-phosphate + phosphate. It functions in the pathway lipid metabolism; phospholipid metabolism. Catalyzes the transfer of an acyl group from acyl-phosphate (acyl-PO(4)) to glycerol-3-phosphate (G3P) to form lysophosphatidic acid (LPA). This enzyme utilizes acyl-phosphate as fatty acyl donor, but not acyl-CoA or acyl-ACP. In Synechococcus elongatus (strain ATCC 33912 / PCC 7942 / FACHB-805) (Anacystis nidulans R2), this protein is Glycerol-3-phosphate acyltransferase.